We begin with the raw amino-acid sequence, 210 residues long: MKKEIASHLLEIGAVFLQPNDPFTWSSGMKSPIYCDNRLTLSYPKVRQAIAAGLEELIKEHFPTVEVIAGTATAGIAHAAWVSDRMDLPMCYVRSKAKGHGKGNQIEGKAEKGQKVVVVEDLISTGGSAITCVEALREAGCEVLGIVSIFTYELEAGKEKLEAANVVSYSLSDYSALTEVAAEKGMIGQAEMKKLQEWRKNPANEAWITA.

Residues Arg-94, Lys-98, His-100, and Glu-120–Ser-128 contribute to the 5-phospho-alpha-D-ribose 1-diphosphate site. Ser-124 contacts orotate.

Belongs to the purine/pyrimidine phosphoribosyltransferase family. PyrE subfamily. As to quaternary structure, homodimer. It depends on Mg(2+) as a cofactor.

The enzyme catalyses orotidine 5'-phosphate + diphosphate = orotate + 5-phospho-alpha-D-ribose 1-diphosphate. The protein operates within pyrimidine metabolism; UMP biosynthesis via de novo pathway; UMP from orotate: step 1/2. Catalyzes the transfer of a ribosyl phosphate group from 5-phosphoribose 1-diphosphate to orotate, leading to the formation of orotidine monophosphate (OMP). In Bacillus cereus (strain B4264), this protein is Orotate phosphoribosyltransferase.